The sequence spans 172 residues: UPF0398 protein gbs0290 (172 aa).

This sequence belongs to the UPF0398 family.

This chain is UPF0398 protein gbs0290, found in Streptococcus agalactiae serotype III (strain NEM316).